A 418-amino-acid polypeptide reads, in one-letter code: 3-isopropylmalate dehydratase large subunit 1 (418 aa).

Residues C298, C358, and C361 each coordinate [4Fe-4S] cluster.

Belongs to the aconitase/IPM isomerase family. LeuC type 2 subfamily. Heterodimer of LeuC and LeuD. It depends on [4Fe-4S] cluster as a cofactor.

It carries out the reaction (2R,3S)-3-isopropylmalate = (2S)-2-isopropylmalate. It participates in amino-acid biosynthesis; L-leucine biosynthesis; L-leucine from 3-methyl-2-oxobutanoate: step 2/4. Functionally, catalyzes the isomerization between 2-isopropylmalate and 3-isopropylmalate, via the formation of 2-isopropylmaleate. In Methanopyrus kandleri (strain AV19 / DSM 6324 / JCM 9639 / NBRC 100938), this protein is 3-isopropylmalate dehydratase large subunit 1.